The sequence spans 363 residues: UDP-N-acetylglucosamine--N-acetylmuramyl-(pentapeptide) pyrophosphoryl-undecaprenol N-acetylglucosamine transferase (363 aa).

Residues 10–12, N124, S195, I250, and Q295 each bind UDP-N-acetyl-alpha-D-glucosamine; that span reads TGG.

It belongs to the glycosyltransferase 28 family. MurG subfamily.

It localises to the cell membrane. It carries out the reaction Mur2Ac(oyl-L-Ala-gamma-D-Glu-L-Lys-D-Ala-D-Ala)-di-trans,octa-cis-undecaprenyl diphosphate + UDP-N-acetyl-alpha-D-glucosamine = beta-D-GlcNAc-(1-&gt;4)-Mur2Ac(oyl-L-Ala-gamma-D-Glu-L-Lys-D-Ala-D-Ala)-di-trans,octa-cis-undecaprenyl diphosphate + UDP + H(+). The protein operates within cell wall biogenesis; peptidoglycan biosynthesis. Its function is as follows. Cell wall formation. Catalyzes the transfer of a GlcNAc subunit on undecaprenyl-pyrophosphoryl-MurNAc-pentapeptide (lipid intermediate I) to form undecaprenyl-pyrophosphoryl-MurNAc-(pentapeptide)GlcNAc (lipid intermediate II). The protein is UDP-N-acetylglucosamine--N-acetylmuramyl-(pentapeptide) pyrophosphoryl-undecaprenol N-acetylglucosamine transferase of Lactiplantibacillus plantarum (strain ATCC BAA-793 / NCIMB 8826 / WCFS1) (Lactobacillus plantarum).